A 137-amino-acid polypeptide reads, in one-letter code: Aspartate 1-decarboxylase (137 aa).

Residue Ser25 is the Schiff-base intermediate with substrate; via pyruvic acid of the active site. Pyruvic acid (Ser) is present on Ser25. Residue Thr57 participates in substrate binding. The Proton donor role is filled by Tyr58. 73-75 (GAA) serves as a coordination point for substrate.

The protein belongs to the PanD family. In terms of assembly, heterooctamer of four alpha and four beta subunits. The cofactor is pyruvate. In terms of processing, is synthesized initially as an inactive proenzyme, which is activated by self-cleavage at a specific serine bond to produce a beta-subunit with a hydroxyl group at its C-terminus and an alpha-subunit with a pyruvoyl group at its N-terminus.

It is found in the cytoplasm. It carries out the reaction L-aspartate + H(+) = beta-alanine + CO2. The protein operates within cofactor biosynthesis; (R)-pantothenate biosynthesis; beta-alanine from L-aspartate: step 1/1. Functionally, catalyzes the pyruvoyl-dependent decarboxylation of aspartate to produce beta-alanine. In Thermobifida fusca (strain YX), this protein is Aspartate 1-decarboxylase.